The chain runs to 480 residues: Type II methyltransferase M.NspV (480 aa).

The protein belongs to the methyltransferase superfamily.

Its function is as follows. A gamma subtype methylase that recognizes the double-stranded sequence 5'-TTCGAA-3', and methylates it on an unknown base to protect it against the NspV endonuclease. This chain is Type II methyltransferase M.NspV, found in Nostoc sp. (strain ATCC 29411 / PCC 7524).